Here is a 61-residue protein sequence, read N- to C-terminus: Arabinogalactan protein 15 (61 aa).

The signal sequence occupies residues 1 to 22 (MAISKASIVVLMMVIISVVASA). Glutamine 23 is subject to Pyrrolidone carboxylic acid. 4-hydroxyproline is present on residues proline 27, proline 29, and proline 31. 3 O-linked (Ara...) hydroxyproline glycosylation sites follow: proline 27, proline 29, and proline 31. The GPI-anchor amidated serine moiety is linked to residue serine 35. Positions 36–61 (SAISASFVSAGVAAVAALVFGSALRI) are cleaved as a propeptide — removed in mature form.

The protein belongs to the AG-peptide AGP family. In terms of processing, contains 4-hydroxyproline; hydroxylated on Pro-27, Pro-29 and Pro-31. Post-translationally, O-glycosylated on hydroxyprolines; noncontiguous hydroxylproline residues are glycosylated with arabinogalactan. Expressed in reproductive tissues. Expressed in chalaza, funiculus, stigma, septum, style, integument and transmitting tract.

It localises to the cell membrane. Proteoglycan that seems to be implicated in diverse developmental roles such as differentiation, cell-cell recognition, embryogenesis and programmed cell death. In Arabidopsis thaliana (Mouse-ear cress), this protein is Arabinogalactan protein 15.